Reading from the N-terminus, the 298-residue chain is Centromere protein O (298 aa).

The interval Asn-29–Thr-49 is disordered. Basic and acidic residues predominate over residues Arg-33–Thr-49. At Ser-35 the chain carries Phosphoserine. Residues Ala-39–Glu-74 adopt a coiled-coil conformation.

Belongs to the CENP-O/MCM21 family. Component of the CENPA-CAD complex, composed of CENPI, CENPK, CENPL, CENPO, CENPP, CENPQ, CENPR and CENPS. The CENPA-CAD complex interacts with the CENPA-NAC complex, at least composed of CENPA, CENPC, CENPH, CENPM, CENPN, CENPT and CENPU.

The protein resides in the nucleus. It localises to the chromosome. Its subcellular location is the centromere. The protein localises to the kinetochore. Its function is as follows. Component of the CENPA-CAD (nucleosome distal) complex, a complex recruited to centromeres which is involved in assembly of kinetochore proteins, mitotic progression and chromosome segregation. May be involved in incorporation of newly synthesized CENPA into centromeres via its interaction with the CENPA-NAC complex. Modulates the kinetochore-bound levels of NDC80 complex. The polypeptide is Centromere protein O (Cenpo) (Mus musculus (Mouse)).